Consider the following 3942-residue polypeptide: Protein bassoon (3942 aa).

The disordered stretch occupies residues 1–158; it reads MGNEASLEGG…PTSPYSVPQI (158 aa). Glycine 2 carries N-myristoyl glycine lipidation. A compositionally biased stretch (gly residues) spans 9-29; sequence GGAGEGPLPPGGSGLGPGPGA. A compositionally biased stretch (low complexity) spans 31–52; sequence KPPSALAGGGQLPVAGAARAAG. Residues 53–71 are compositionally biased toward pro residues; that stretch reads PPTPGLGPVPGPGPGPGPG. Residues 62-71 are 5 X 2 AA tandem repeats of P-G; the sequence is PGPGPGPGPG. Composition is skewed to polar residues over residues 85-98 and 127-154; these read SQRT…QASA and QVDS…SPYS. A Phosphoserine modification is found at serine 142. Arginine 145 is modified (omega-N-methylarginine). 2 consecutive C4-type zinc fingers follow at residues 167–190 and 195–217; these read CPIC…CTQC and CNQC…CLNC. Disordered regions lie at residues 228 to 341 and 362 to 457; these read TTAP…EQTQ and LMSV…KTMP. Polar residues predominate over residues 230 to 240; that stretch reads APRSKSQQQLH. Residues serine 241 and serine 245 each carry the phosphoserine modification. Positions 362–379 are enriched in polar residues; it reads LMSVQPEADTQGQPSPSK. The span at 395-407 shows a compositional bias: pro residues; that stretch reads PRPPGSGPGPGPT. 2 C4-type zinc fingers span residues 464 to 487 and 492 to 514; these read CPLC…CTAC and CNLC…CLNC. Disordered regions lie at residues 525–937, 950–1258, 1309–1553, and 1573–1625; these read GEPA…LQGG, GSYG…VAES, MDPM…WQQS, and RMVH…PSAG. Pro residues predominate over residues 528 to 541; that stretch reads APLPLPTPQQPPAG. 5 repeat units span residues 570 to 576, 577 to 583, 584 to 590, 591 to 597, and 598 to 604. Residues 570–604 are 5 X 7 AA tandem repeats of K-A-S-P-Q-[AT]-[AT]; the sequence is KASPQATKASPQATKASPQATKASPQTTKASPQAK. Residues 573–600 are compositionally biased toward polar residues; sequence PQATKASPQATKASPQATKASPQTTKAS. Positions 632–645 are enriched in pro residues; sequence VPKPPPETTVPPGT. The span at 684–693 shows a compositional bias: polar residues; it reads QDLSRSPQSL. Residues 694–708 show a composition bias toward low complexity; it reads SDTGYSSDGVSSSQS. The segment covering 709–718 has biased composition (polar residues); sequence EITGVVQQEV. Composition is skewed to acidic residues over residues 787-802 and 865-876; these read FDSD…EDDS and SAEEDNLEEDDT. Arginine 881 carries the omega-N-methylarginine modification. Basic and acidic residues predominate over residues 895–905; sequence PRPESSQEPKR. Serine 980 is modified (phosphoserine). The segment covering 994 to 1011 has biased composition (low complexity); that stretch reads PASTPSYTSGTSPTSLSS. Residues 1049-1062 show a composition bias toward acidic residues; sequence DSSEEEELREEEEL. A phosphoserine mark is found at serine 1050 and serine 1051. Positions 1063–1076 are enriched in basic and acidic residues; sequence LREQEKMREVEQQR. Position 1100 is a phosphoserine (serine 1100). Threonine 1102 is modified (phosphothreonine). Phosphoserine is present on residues serine 1108 and serine 1114. The span at 1117-1132 shows a compositional bias: basic and acidic residues; it reads EELRQAAEMEELHRSS. Low complexity-rich tracts occupy residues 1133–1143 and 1173–1190; these read CSEYSPSPSLD and SPTE…SGRP. A compositionally biased stretch (basic and acidic residues) spans 1192–1207; it reads KSAEEAYEDMMRKAEM. A compositionally biased stretch (low complexity) spans 1209–1219; the sequence is QRQQGQVAGAR. Residues 1226 to 1240 are compositionally biased toward polar residues; the sequence is SQPTGPRSQGSFEYQ. Serine 1236 is modified (phosphoserine). Residues 1333 to 1343 are compositionally biased toward low complexity; it reads SFSTSTSSDSS. A glycan (O-linked (GlcNAc) threonine) is linked at threonine 1354. Residues 1357–1366 show a composition bias toward basic and acidic residues; that stretch reads FAKEPQDPLK. Over residues 1370-1438 the composition is skewed to polar residues; the sequence is SPVSSTLTSK…TTANYGSQTE (69 aa). O-linked (GlcNAc) threonine glycosylation is present at threonine 1395. Serine 1482, serine 1491, and serine 1493 each carry phosphoserine. Low complexity predominate over residues 1488-1498; sequence STPSESPTFSP. Polar residues-rich tracts occupy residues 1508-1522 and 1573-1609; these read EFST…SSDI and RMVH…SQMP. A glycan (O-linked (GlcNAc) serine) is linked at serine 1707. An omega-N-methylarginine mark is found at arginine 1792 and arginine 1796. Asymmetric dimethylarginine; alternate is present on arginine 1806. Residue arginine 1806 is modified to Omega-N-methylarginine; alternate. Arginine 1818 bears the Omega-N-methylarginine mark. Disordered stretches follow at residues 1831–1865 and 1926–1977; these read GVGL…TRKP and PSAP…QRPY. Residues 1844–1856 show a composition bias toward basic and acidic residues; sequence AEPHRATPAELRS. Residue threonine 1934 is glycosylated (O-linked (GlcNAc) threonine). Phosphoserine is present on residues serine 1990 and serine 2046. Omega-N-methylarginine occurs at positions 2051 and 2081. Arginine 2255, arginine 2265, and arginine 2270 each carry asymmetric dimethylarginine. O-linked (GlcNAc) threonine glycosylation is present at threonine 2318. 3 disordered regions span residues 2327-2378, 2476-2504, and 2524-2663; these read PVAP…KQQE, EQKQ…TELA, and TEGP…STTA. The span at 2329–2342 shows a compositional bias: pro residues; that stretch reads APAPGPAPAPPPGQ. A compositionally biased stretch (basic and acidic residues) spans 2361–2378; that stretch reads ASEKEEASQEDRQRKQQE. Coiled coils occupy residues 2366 to 2422 and 2453 to 2483; these read EASQ…LVQR and LAQQ…RQKA. A glycan (O-linked (GlcNAc) threonine) is linked at threonine 2524. A compositionally biased stretch (polar residues) spans 2541–2551; sequence SSASDMSLQTE. Serine 2578 carries the post-translational modification Phosphoserine. A phosphothreonine mark is found at threonine 2595 and threonine 2622. Basic and acidic residues predominate over residues 2643 to 2655; that stretch reads RHSDSGSDSKHDA. O-linked (GlcNAc) threonine glycosylation occurs at threonine 2700. The interaction with DAO stretch occupies residues 2730–3278; that stretch reads EPDGQAQGVA…GGVSGRPGKD (549 aa). A phosphoserine mark is found at serine 2811, serine 2860, and serine 2866. Positions 2854 to 2874 are disordered; the sequence is TLQRSLSDPKPLSPTAEESAK. A glycan (O-linked (GlcNAc) threonine) is linked at threonine 2945. Serine 3022 carries the phosphoserine modification. Disordered regions lie at residues 3051 to 3409, 3431 to 3560, and 3581 to 3917; these read PATP…LTSR, YYGV…PRAH, and EAYH…KILP. A compositionally biased stretch (polar residues) spans 3073–3083; sequence TAGSSGPTQNG. Residues 3089–3114 show a composition bias toward low complexity; that stretch reads APTYTGPSTYPAPTYPPGTGYPAEPG. The span at 3202-3211 shows a compositional bias: basic and acidic residues; it reads KAPEHPRGSD. Positions 3212–3237 are enriched in polar residues; that stretch reads RSSVSQSPAPTYPSDSHYTSLEQNVP. At serine 3301 the chain carries Phosphoserine. Composition is skewed to basic and acidic residues over residues 3330–3342 and 3372–3391; these read GDSD…RADK and QGME…KDVE. Serine 3382 is subject to Phosphoserine. Residues 3447 to 3461 show a composition bias toward low complexity; that stretch reads YGSSSRSRMASAYSG. Residues 3464 to 3487 are compositionally biased toward basic and acidic residues; the sequence is LSSHDYSSRGKGYERERDTAERLQ. Position 3502 is an omega-N-methylarginine (arginine 3502). The segment covering 3520–3534 has biased composition (low complexity); that stretch reads PLGRPRPAGGALPPG. Composition is skewed to basic and acidic residues over residues 3549–3560 and 3592–3602; these read VQEHVKDGPRAH and WFDKPRDARSD. Residues 3652 to 3665 are compositionally biased toward basic residues; sequence EHRHHSDHGRHSGR. The segment covering 3666–3690 has biased composition (basic and acidic residues); sequence HAGEEPGRRAAKPHARDMGRHEARP. Residues 3750 to 3820 show a composition bias toward low complexity; the sequence is TQAQPQMQGR…QARLQPQSQP (71 aa). Omega-N-methylarginine is present on arginine 3823. The segment covering 3835-3851 has biased composition (pro residues); that stretch reads KPQPGPTTAPGPQPAGP. The span at 3856–3891 shows a compositional bias: low complexity; the sequence is QASSSKPPAAKAPQQGRAPQAQTTPGPGPAGAKPGA.

Interacts with PCLO, ERC2/CAST1, RIMS1 and UNC13A. Interacts with TPRG1L. Interacts with DYNLL1 and DYNLL2; these interactions potentially link PTVs to dynein and myosin V motor complexes. Interacts with ATG5; this interaction is important for the regulation of presynaptic autophagy. Interacts (via C-terminus) with TRIO (via N-terminus). Interacts with CTBP1. Interacts with SIAH1; this interaction negatively regulates SIAH1 E3 ligase activity. Interacts (via coiled region) with DAO; the interaction is direct. Post-translationally, myristoylated. The N-terminal myristoylation is not sufficient for presynaptic localization. Expressed in brain and retina.

It is found in the cytoplasm. The protein resides in the presynaptic active zone. The protein localises to the cytoskeleton. Its subcellular location is the cytoplasmic vesicle. It localises to the secretory vesicle. It is found in the synaptic vesicle membrane. Scaffold protein of the presynaptic cytomatrix at the active zone (CAZ) which is the place in the synapse where neurotransmitter is released. After synthesis, participates in the formation of Golgi-derived membranous organelles termed Piccolo-Bassoon transport vesicles (PTVs) that are transported along axons to sites of nascent synaptic contacts. At the presynaptic active zone, regulates the spatial organization of synaptic vesicle cluster, the protein complexes that execute membrane fusion and compensatory endocytosis. Also functions in processes other than assembly such as the regulation of specific presynaptic protein ubiquitination by interacting with SIAH1 or the regulation of presynaptic autophagy by associating with ATG5. Also mediates synapse to nucleus communication leading to reconfiguration of gene expression by associating with the transcriptional corepressor CTBP1 and by subsequently reducing the size of its pool available for nuclear import. Inhibits the activity of the proportion of DAO enzyme that localizes to the presynaptic active zone, which may modulate synaptic transmission. This Mus musculus (Mouse) protein is Protein bassoon.